A 493-amino-acid chain; its full sequence is 3-octaprenyl-4-hydroxybenzoate carboxy-lyase (493 aa).

A Mn(2+)-binding site is contributed by Asn172. Prenylated FMN is bound by residues 175–177, 189–191, and 194–195; these read IYR, RWL, and RG. Glu238 contacts Mn(2+). Residue Asp287 is the Proton donor of the active site.

Belongs to the UbiD family. Homohexamer. Prenylated FMN serves as cofactor. The cofactor is Mn(2+).

It localises to the cell membrane. It catalyses the reaction a 4-hydroxy-3-(all-trans-polyprenyl)benzoate + H(+) = a 2-(all-trans-polyprenyl)phenol + CO2. It participates in cofactor biosynthesis; ubiquinone biosynthesis. Its function is as follows. Catalyzes the decarboxylation of 3-octaprenyl-4-hydroxy benzoate to 2-octaprenylphenol, an intermediate step in ubiquinone biosynthesis. The protein is 3-octaprenyl-4-hydroxybenzoate carboxy-lyase of Shewanella putrefaciens (strain CN-32 / ATCC BAA-453).